Reading from the N-terminus, the 208-residue chain is Large ribosomal subunit protein bL9 (208 aa).

Residues 168–208 (GKVEKGSCTEGESLELGSVDNDINSGNVDSNESEKQDSVSE) are disordered. Residues 188–197 (NDINSGNVDS) are compositionally biased toward polar residues. Over residues 199–208 (ESEKQDSVSE) the composition is skewed to basic and acidic residues.

Belongs to the bacterial ribosomal protein bL9 family.

Functionally, binds to the 23S rRNA. The protein is Large ribosomal subunit protein bL9 of Ehrlichia chaffeensis (strain ATCC CRL-10679 / Arkansas).